Consider the following 83-residue polypeptide: Putative defensin-like protein 131 (83 aa).

The signal sequence occupies residues 1–34; that stretch reads MAKNRVLTIFYCTIYYCICFKYVLLGMVVEKTQG. 4 cysteine pairs are disulfide-bonded: Cys-37/Cys-83, Cys-46/Cys-65, Cys-51/Cys-77, and Cys-55/Cys-79.

It belongs to the DEFL family.

It is found in the secreted. In Arabidopsis thaliana (Mouse-ear cress), this protein is Putative defensin-like protein 131 (LCR29).